We begin with the raw amino-acid sequence, 627 residues long: Nuclear receptor subfamily 4 group A member 3 (627 aa).

The interval 1–112 is activation function (AF)-1 domain; that stretch reads MPCVQAQYSP…HHHHHHHHHQ (112 aa). Residues 1 to 139 are required for DNA-PK heterotrimer; that stretch reads MPCVQAQYSP…PSTSMYFKQS (139 aa). Residues 1–292 are interaction with NCOA1, NCOA2, NCOA3 and KAT2B; the sequence is MPCVQAQYSP…NRSSSSGEGT (292 aa). Disordered regions lie at residues 96–162 and 268–289; these read HGYH…DELP and ASSL…SSSG. The span at 97 to 112 shows a compositional bias: basic residues; the sequence is GYHHHHHHHHHHHHHQ. The segment covering 141-150 has biased composition (pro residues); that stretch reads PSTPTTPGFP. Positions 269–288 are enriched in low complexity; sequence SSLLGESPSLPSPPNRSSSS. The segment at residues 290–365 is a DNA-binding region (nuclear receptor); that stretch reads EGTCAVCGDN…VGMVKEVVRT (76 aa). 2 consecutive NR C4-type zinc fingers follow at residues 293–313 and 329–353; these read CAVC…CEGC and CLAN…FQKC. Residues 365-395 are disordered; it reads TDSLKGRRGRLPSKPKSPLQQEPSQPSPPSP. The segment covering 378 to 388 has biased composition (low complexity); it reads KPKSPLQQEPS. An interaction with KAT2B region spans residues 380-627; it reads KSPLQQEPSQ…DKLFLDTLPF (248 aa). The NR LBD domain occupies 395 to 624; it reads PPICMMNALV…SVIDKLFLDT (230 aa).

Belongs to the nuclear hormone receptor family. NR4 subfamily. In terms of assembly, interacts with SIX3 (via homeobox); differentially regulates the transcriptional activities of NR4A3. Interacts with NCOA2; potentiates the activity of the NR4A3. Interacts with NCOA1, NCOA3, MED1 and KAT2B. Interacts with EP300 and NCOA2; mediates the recruitment of MED1 in the coactivator complex. Interacts with the constituents of DNA-PK heterotrimer PRKDC, XRCC6 and XRCC5; phosphorylates and prevents NR4A3 ubiquitinylation and degradation. Interacts with NR3C1 (via nuclear receptor DNA-binding domain); the interactions represses transcription activity of NR4A3 on the POMC promoter Nur response element (NurRE). Interacts with TRIM28; the interactions potentiates NR4A3 activity on NurRE promoter. Binds DNA as a monomer and homodimer. Interacts with PARP1; activates PARP1 by improving acetylation of PARP1 and suppressing the interaction between PARP1 and SIRT1. Phosphorylated by PRKDC. As to expression, ubiquitous. Highest levels of expression in brain. Widely expressed throughout the arcuate nucleus region of the hypothalamus, namely in AgRP neurons.

The protein localises to the nucleus. Its function is as follows. Transcriptional activator that binds to regulatory elements in promoter regions in a cell- and response element (target)-specific manner. Induces gene expression by binding as monomers to the NR4A1 response element (NBRE) 5'-AAAAGGTCA-3' site and as homodimers to the Nur response element (NurRE) site in the promoter of their regulated target genes. Plays a role in the regulation of proliferation, survival and differentiation of many different cell types and also in metabolism and inflammation. Mediates proliferation of vascular smooth muscle, myeloid progenitor cell and type B pancreatic cells; promotes mitogen-induced vascular smooth muscle cell proliferation through transactivation of SKP2 promoter by binding a NBRE site. Upon PDGF stimulation, stimulates vascular smooth muscle cell proliferation by regulating CCND1 and CCND2 expression. In islets, induces type B pancreatic cell proliferation through up-regulation of genes that activate cell cycle, as well as genes that cause degradation of the CDKN1A. Negatively regulates myeloid progenitor cell proliferation by repressing RUNX1 in a NBRE site-independent manner. During inner ear, plays a role as a key mediator of the proliferative growth phase of semicircular canal development. Also mediates survival of neuron and smooth muscle cells; mediates CREB-induced neuronal survival, and during hippocampus development, plays a critical role in pyramidal cell survival and axonal guidance. Is required for S phase entry of the cell cycle and survival of smooth muscle cells by inducing CCND1, resulting in RB1 phosphorylation. Binds to NBRE motif in CCND1 promoter, resulting in the activation of the promoter and CCND1 transcription. Also plays a role in inflammation; upon TNF stimulation, mediates monocyte adhesion by inducing the expression of VCAM1 and ICAM1 by binding to the NBRE consensus site. In mast cells activated by Fc-epsilon receptor cross-linking, promotes the synthesis and release of cytokines but impairs events leading to degranulation. Also plays a role in metabolism; by modulating feeding behavior; and by playing a role in energy balance by inhibiting the glucocorticoid-induced orexigenic neuropeptides AGRP expression, at least in part by forming a complex with activated NR3C1 on the AGRP- glucocorticoid response element (GRE), and thus weakening the DNA binding activity of NR3C1. Upon catecholamines stimulation, regulates gene expression that controls oxidative metabolism in skeletal muscle. Plays a role in glucose transport by regulating translocation of the SLC2A4 glucose transporter to the cell surface. Finally, during gastrulation plays a crucial role in the formation of anterior mesoderm by controlling cell migration. Inhibits adipogenesis. Also participates in cardiac hypertrophy by activating PARP1. The sequence is that of Nuclear receptor subfamily 4 group A member 3 (Nr4a3) from Mus musculus (Mouse).